Reading from the N-terminus, the 290-residue chain is Protein male abnormal 3 (290 aa).

2 consecutive DNA-binding regions (DM) follow at residues 28–74 (CQRC…SKKK) and 94–142 (CARC…KLRR). Disordered regions lie at residues 139–167 (KLRRSQQKSRDGKEPKRNSRRKSKDMDME) and 179–202 (IIGTSASPSPSSTTDTMSPSLSMS). Basic and acidic residues predominate over residues 146–155 (KSRDGKEPKR). Residues 182–202 (TSASPSPSSTTDTMSPSLSMS) are compositionally biased toward low complexity.

As to expression, expression is undetectable in hermaphrodites, but persists in males. In males, expressed in cells of the tail tip.

It is found in the nucleus. Transcription factor which binds the DNA motif 5'-[CGA][TCA][TA]ACAATGT[AT][TGA]C-3', probably as a monomer. Acts partially redundantly with the transcription factor dmd-3 to coordinate tail tip cell fusion and retraction and thereby regulate male tail tip morphogenesis. Promotes male-specific development of two tissues, the peripheral nervous system and the intestine. In the peripheral nervous system, directs differentiation of sensory ray neuroblasts into peripheral sense organs. In the intestine, causes repression of vitellogenin gene transcription. This is Protein male abnormal 3 from Caenorhabditis elegans.